Reading from the N-terminus, the 1889-residue chain is Treslin (1889 aa).

9 positions are modified to phosphoserine: Ser295, Ser599, Ser820, Ser861, Ser919, Ser934, Ser1002, Ser1027, and Ser1078. A compositionally biased stretch (low complexity) spans 812–832; it reads DSMSQESMSPPPSSSTHRSVS. Residues 812–836 are disordered; the sequence is DSMSQESMSPPPSSSTHRSVSAITE. The disordered stretch occupies residues 979–1063; it reads RLLHRQIKGR…RENFPVQSIQ (85 aa). Residues 1020–1050 show a composition bias toward polar residues; the sequence is LSFSRTNSGSFYSVSQPKSRSVQRIHSSQQE. 6 disordered regions span residues 1098–1421, 1471–1508, 1520–1543, 1630–1714, 1730–1751, and 1841–1875; these read EIST…SQFS, LPGE…SSSE, GKQR…SPQT, SCTP…SLEQ, VCQL…ETSW, and QGRT…TLSR. The segment covering 1127 to 1179 has biased composition (polar residues); it reads TAQTLLYTPERLQNSPTEMTSAEGTISEATIKTPSSHGYNSPFASKVTSQKTV. Thr1134 is subject to Phosphothreonine. Ser1141 carries the phosphoserine modification. Residues 1187 to 1197 show a composition bias toward low complexity; that stretch reads SPPLTKLPSTP. Residues 1203-1219 show a composition bias toward polar residues; it reads QPPQCSSDCTWPHSVNS. Over residues 1339 to 1351 the composition is skewed to low complexity; it reads TSPSVTSSVSCPV. Positions 1373 to 1382 are enriched in basic residues; that stretch reads KLRRSCRKKS. Ser1406 bears the Phosphoserine mark. Positions 1496 to 1508 are enriched in low complexity; sequence LVPAPSSVSSSSE. 2 stretches are compositionally biased toward polar residues: residues 1525–1543 and 1652–1662; these read DAAQ…SPQT and WTPSPKQSGKT. Over residues 1705–1714 the composition is skewed to basic and acidic residues; it reads PEGKERSLEQ.

Belongs to the treslin family. In terms of assembly, interacts with TOPBP1 (via BRCT domains); interaction takes place in a CDK2-dependent manner. Component of the replisome complex composed of at least DONSON, MCM2, MCM7, PCNA and TICRR.

The protein localises to the nucleus. Regulator of DNA replication and S/M and G2/M checkpoints. Regulates the triggering of DNA replication initiation via its interaction with TOPBP1 by participating in CDK2-mediated loading of CDC45L onto replication origins. Required for the transition from pre-replication complex (pre-RC) to pre-initiation complex (pre-IC). Required to prevent mitotic entry after treatment with ionizing radiation. In Mus musculus (Mouse), this protein is Treslin (Ticrr).